The primary structure comprises 153 residues: MDYNVQHVDKRHAAGFHLVGPWEQTVPQGFEQLMKWVDEHAVQPLEWVAVYYGNPQETPPEKLEADTVVSVSADFHLPADGEGAITTEIAAGQYAIARVRVSNDDFGMSWQAFFAALLGDGKTIDPARACFEVYLNDGYSDGFWDIDMHIPVQ.

Belongs to the DNA gyrase inhibitor family. Interacts with DNA gyrase.

The protein resides in the cytoplasm. Inhibits the supercoiling activity of DNA gyrase. Acts by inhibiting DNA gyrase at an early step, prior to (or at the step of) binding of DNA by the gyrase. It protects cells against toxins that target DNA gyrase, by inhibiting activity of these toxins and reducing the formation of lethal double-strand breaks in the cell. The protein is DNA gyrase inhibitor 1 of Dickeya dadantii (strain 3937) (Erwinia chrysanthemi (strain 3937)).